The chain runs to 305 residues: Sulfate adenylyltransferase subunit 2 (305 aa).

It belongs to the PAPS reductase family. CysD subfamily. In terms of assembly, heterodimer composed of CysD, the smaller subunit, and CysN.

It catalyses the reaction sulfate + ATP + H(+) = adenosine 5'-phosphosulfate + diphosphate. It participates in sulfur metabolism; hydrogen sulfide biosynthesis; sulfite from sulfate: step 1/3. With CysN forms the ATP sulfurylase (ATPS) that catalyzes the adenylation of sulfate producing adenosine 5'-phosphosulfate (APS) and diphosphate, the first enzymatic step in sulfur assimilation pathway. APS synthesis involves the formation of a high-energy phosphoric-sulfuric acid anhydride bond driven by GTP hydrolysis by CysN coupled to ATP hydrolysis by CysD. The sequence is that of Sulfate adenylyltransferase subunit 2 from Pseudomonas savastanoi pv. phaseolicola (strain 1448A / Race 6) (Pseudomonas syringae pv. phaseolicola (strain 1448A / Race 6)).